Here is a 598-residue protein sequence, read N- to C-terminus: Probable transporter mch1 (598 aa).

Positions 1–49 (MASPTPAPRPDQISASTPLLQSDSTSSCASSIRSLSPSRRRHRNGRTSP) are disordered. The segment covering 22–37 (SDSTSSCASSIRSLSP) has biased composition (low complexity). Asn57 is a glycosylation site (N-linked (GlcNAc...) asparagine). Helical transmembrane passes span 63 to 83 (ALLS…GHIF), 96 to 116 (GLSS…GYMC), 122 to 142 (GPLS…AAGV), 164 to 184 (LAYA…CSMY), 202 to 222 (GLAL…QSQL), and 241 to 261 (VFHF…LGTF). The interval 315 to 334 (AGILDPSKPDNDSDSEEEDD) is disordered. Asn325 is a glycosylation site (N-linked (GlcNAc...) asparagine). Helical transmembrane passes span 355 to 375 (HTMW…EAFI), 405 to 425 (IVGI…DLLA), 453 to 473 (FLLF…SGWI), 486 to 506 (LVGA…TVIW), 516 to 536 (GIVA…YSAV), and 565 to 585 (SAFW…LWAW).

Belongs to the major facilitator superfamily.

It localises to the vacuole membrane. Its function is as follows. Probable transporter. The sequence is that of Probable transporter mch1 (mch1) from Neurospora crassa (strain ATCC 24698 / 74-OR23-1A / CBS 708.71 / DSM 1257 / FGSC 987).